Consider the following 895-residue polypeptide: DNA double-strand break repair Rad50 ATPase (895 aa).

ATP is bound by residues 32–38 (NGAGKSS) and Gln-137. A coiled-coil region spans residues 183 to 253 (SDYDYLKNEL…LNAQLETIKK (71 aa)). In terms of domain architecture, Zinc-hook spans 411–507 (RAEINSSLMQ…ERKHQKKLLD (97 aa)). The Zn(2+) site is built by Cys-455 and Cys-458. Coiled-coil stretches lie at residues 464-510 (TEKS…DRIN) and 618-647 (ENSL…AMDE).

This sequence belongs to the SMC family. RAD50 subfamily. As to quaternary structure, homodimer. Forms a heterotetramer composed of two Mre11 subunits and two Rad50 subunits. It depends on Zn(2+) as a cofactor.

Part of the Rad50/Mre11 complex, which is involved in the early steps of DNA double-strand break (DSB) repair. The complex may facilitate opening of the processed DNA ends to aid in the recruitment of HerA and NurA. Rad50 controls the balance between DNA end bridging and DNA resection via ATP-dependent structural rearrangements of the Rad50/Mre11 complex. In Thermoplasma volcanium (strain ATCC 51530 / DSM 4299 / JCM 9571 / NBRC 15438 / GSS1), this protein is DNA double-strand break repair Rad50 ATPase.